The sequence spans 663 residues: Glucans biosynthesis glucosyltransferase H (663 aa).

6 consecutive transmembrane segments (helical) span residues 64–86 (WMLG…DTIA), 101–123 (LAPL…VVLM), 413–435 (LVIG…AGLI), 470–492 (AWAM…ILVL), 558–580 (EAWA…FWFT), and 584–606 (LTAT…LGAH).

The protein belongs to the glycosyltransferase 2 family. OpgH subfamily.

It is found in the cell inner membrane. It participates in glycan metabolism; osmoregulated periplasmic glucan (OPG) biosynthesis. Functionally, involved in the biosynthesis of osmoregulated periplasmic glucans (OPGs). This is Glucans biosynthesis glucosyltransferase H from Caulobacter vibrioides (strain ATCC 19089 / CIP 103742 / CB 15) (Caulobacter crescentus).